The following is a 127-amino-acid chain: Fluoride-specific ion channel FluC (127 aa).

The next 4 membrane-spanning stretches (helical) occupy residues 4–24 (PILAIALGSTLGGLLRWGLGL), 36–56 (GTLVANLIAGYVVGVAIAFFA), 68–88 (LVITGFCGGLSTFSTFSAEIV), and 98–118 (WAMSAIAVHVAGSLIMTLAGI). 2 residues coordinate Na(+): glycine 75 and serine 78.

It belongs to the fluoride channel Fluc/FEX (TC 1.A.43) family.

The protein resides in the cell inner membrane. The enzyme catalyses fluoride(in) = fluoride(out). Na(+) is not transported, but it plays an essential structural role and its presence is essential for fluoride channel function. In terms of biological role, fluoride-specific ion channel. Important for reducing fluoride concentration in the cell, thus reducing its toxicity. The protein is Fluoride-specific ion channel FluC of Nitrosomonas europaea (strain ATCC 19718 / CIP 103999 / KCTC 2705 / NBRC 14298).